The primary structure comprises 492 residues: Argininosuccinate lyase (492 aa).

The protein belongs to the lyase 1 family. Argininosuccinate lyase subfamily.

It localises to the cytoplasm. The catalysed reaction is 2-(N(omega)-L-arginino)succinate = fumarate + L-arginine. Its pathway is amino-acid biosynthesis; L-arginine biosynthesis; L-arginine from L-ornithine and carbamoyl phosphate: step 3/3. In Methanocorpusculum labreanum (strain ATCC 43576 / DSM 4855 / Z), this protein is Argininosuccinate lyase.